Here is a 1378-residue protein sequence, read N- to C-terminus: Roundabout homolog 2 (1378 aa).

The N-terminal stretch at 1-21 (MSLLMFTQLLLCGFLYVRVDG) is a signal peptide. The Extracellular segment spans residues 22 to 859 (SRLRQEDFPP…EQITDVVKQP (838 aa)). 5 consecutive Ig-like C2-type domains span residues 31-127 (PRIV…ASLE), 133-220 (DDFR…AELT), 225-309 (PTFL…ATLT), 314-409 (PQFV…LEVT), and 418-504 (PIIL…AVLD). A disulfide bond links cysteine 52 and cysteine 110. Residue asparagine 123 is glycosylated (N-linked (GlcNAc...) asparagine). Cystine bridges form between cysteine 154–cysteine 203, cysteine 246–cysteine 293, and cysteine 335–cysteine 391. Asparagine 426 carries N-linked (GlcNAc...) asparagine glycosylation. A disulfide bond links cysteine 439 and cysteine 488. Fibronectin type-III domains lie at 524–618 (PPSK…TQDI), 637–735 (VLVR…TEEA), and 739–836 (PPQS…IGRR). The interval 603–625 (LSDPSPMSDPVRTQDISPPAQGV) is disordered. N-linked (GlcNAc...) asparagine glycans are attached at residues asparagine 752, asparagine 782, asparagine 789, and asparagine 845. A helical membrane pass occupies residues 860 to 880 (AFIAGIGGACWVILMGFSIWL). Over 881–1378 (YWRRKKRKGL…NSQGQFTGEL (498 aa)) the chain is Cytoplasmic. Disordered regions lie at residues 1032-1084 (GFGY…PLPG), 1124-1156 (EDDDRVPTPPVRGVASSPAISFGQQSTATLTPS), and 1215-1348 (DVAD…KTEV). Residues 1058-1067 (SSKPQKNNGS) are compositionally biased toward low complexity. Residues 1141-1155 (PAISFGQQSTATLTP) are compositionally biased toward polar residues. Phosphothreonine is present on threonine 1154. Serine 1156 is subject to Phosphoserine. Acidic residues predominate over residues 1215-1228 (DVADDDADDEEEAL). Polar residues predominate over residues 1240-1285 (TPGSSMDNLDSSVTGKAFTSSQRPRPTSPFSTDSNTSAALSQSQRP). The span at 1319–1343 (SKPSFPSPGGHSSSGTASSKGSTGP) shows a compositional bias: low complexity.

This sequence belongs to the immunoglobulin superfamily. ROBO family. Interacts with SLIT2.

The protein resides in the membrane. Receptor for SLIT2, and probably SLIT1, which are thought to act as molecular guidance cue in cellular migration, including axonal navigation at the ventral midline of the neural tube and projection of axons to different regions during neuronal development. This Homo sapiens (Human) protein is Roundabout homolog 2 (ROBO2).